The primary structure comprises 355 residues: Lipopolysaccharide heptosyltransferase 1 (355 aa).

Positions 186, 187, 191, 221, 260, 261, 262, and 265 each coordinate ADP-L-glycero-beta-D-manno-heptose.

It belongs to the glycosyltransferase 9 family.

Its subcellular location is the cell inner membrane. It carries out the reaction an alpha-Kdo-(2-&gt;4)-alpha-Kdo-(2-&gt;6)-lipid A + ADP-L-glycero-beta-D-manno-heptose = an L-alpha-D-Hep-(1-&gt;5)-[alpha-Kdo-(2-&gt;4)]-alpha-Kdo-(2-&gt;6)-lipid A + ADP + H(+). It functions in the pathway bacterial outer membrane biogenesis; LPS core biosynthesis. In terms of biological role, glycosyltransferase involved in the biosynthesis of the core oligosaccharide region of lipopolysaccharide (LPS). Catalyzes the addition of the first heptose unit to one 3-deoxy-D-manno-octulosonic acid (Kdo) residue of the Kdo2-lipid A module. The polypeptide is Lipopolysaccharide heptosyltransferase 1 (Pseudomonas aeruginosa (strain ATCC 15692 / DSM 22644 / CIP 104116 / JCM 14847 / LMG 12228 / 1C / PRS 101 / PAO1)).